We begin with the raw amino-acid sequence, 977 residues long: RNA-binding protein 15 (977 aa).

Basic and acidic residues-rich tracts occupy residues 1 to 10, 35 to 52, 59 to 72, and 98 to 113; these read MRTAGRDPVP, RGDD…ERSP, RGGE…ERSK, and LHLD…REYD. A disordered region spans residues 1–167; that stretch reads MRTAGRDPVP…SSAPGGGDGA (167 aa). S109 carries the post-translational modification Phosphoserine. Residues 119 to 130 show a composition bias toward low complexity; it reads SSSRLHSYSSPS. Positions 135 to 150 are enriched in gly residues; it reads SGGGESRSSSRGGGGE. Residues 151–160 show a composition bias toward low complexity; it reads SRSSGAASSA. The region spanning 170–252 is the RRM 1 domain; it reads KTLKISELGS…RPLKIEAVYV (83 aa). A phosphoserine mark is found at S179, S208, and S210. Residue K246 forms a Glycyl lysine isopeptide (Lys-Gly) (interchain with G-Cter in SUMO2) linkage. 3 positions are modified to phosphoserine: S253, S257, and S259. The interval 256–298 is disordered; that stretch reads RSRSPLDKDTYPPSASVVGASVGGHRHPPGGGGGQRSLSPGGA. The residue at position 266 (Y266) is a Phosphotyrosine. Residues S292, S294, and S365 each carry the phosphoserine modification. RRM domains follow at residues 374–451 and 455–529; these read RTLF…YGKA and TRLW…FADT. Glycyl lysine isopeptide (Lys-Gly) (interchain with G-Cter in SUMO2) cross-links involve residues K406, K420, and K445. K450 is modified (N6-acetyllysine). Composition is skewed to basic and acidic residues over residues 555 to 581 and 613 to 661; these read HRAP…RDLY and SLDR…ESDR. The tract at residues 555 to 778 is disordered; it reads HRAPDPLRGA…KQDGGTAPVA (224 aa). T568 bears the Phosphothreonine mark. R578 carries the post-translational modification Asymmetric dimethylarginine; alternate; by PRMT1. Omega-N-methylarginine; alternate; by PRMT1 is present on R578. Residues S622, S656, S670, S674, S700, and S741 each carry the phosphoserine modification. Basic and acidic residues-rich tracts occupy residues 673–728 and 741–750; these read RSPE…AERD and SPLKKEDRSD. K744 participates in a covalent cross-link: Glycyl lysine isopeptide (Lys-Gly) (interchain with G-Cter in SUMO2). Over residues 752–771 the composition is skewed to polar residues; it reads SAPSTSTASSKLKSPSQKQD. Phosphoserine occurs at positions 765, 767, and 781. In terms of domain architecture, SPOC spans 777–956; that stretch reads VASASPKLCL…YLVMIIVRGF (180 aa). The tract at residues 865–884 is disordered; that stretch reads GSSDSRSSSSSAASDTATST. A compositionally biased stretch (low complexity) spans 866-884; the sequence is SSDSRSSSSSAASDTATST. S935 bears the Phosphoserine mark.

Belongs to the RRM Spen family. As to quaternary structure, component of the WMM complex, a N6-methyltransferase complex composed of a catalytic subcomplex, named MAC, and of an associated subcomplex, named MACOM. The MAC subcomplex is composed of METTL3 and METTL14. The MACOM subcomplex is composed of WTAP, ZC3H13, CBLL1/HAKAI, VIRMA, and, in some cases of RBM15 (RBM15 or RBM15B). Also a component of a MACOM-like complex, named WTAP complex, composed of WTAP, ZC3H13, CBLL1, VIRMA, RBM15, BCLAF1 and THRAP3. Interacts with RBPJ. Interacts (via SPOC domain) with SETD1B. Interacts with NXF1, the interaction is required to promote mRNA export. Interacts with SF3B1. (Microbial infection) Interacts with Epstein-Barr virus BSFL2/BMLF1. In terms of processing, methylated at Arg-578 by PRMT1, leading to promote ubiquitination by CNOT4 and subsequent degradation by the proteasome. Post-translationally, ubiquitinated by CNOT4 following methylation at Arg-578 by PRMT1.

The protein localises to the nucleus speckle. It localises to the nucleus. Its subcellular location is the nucleoplasm. The protein resides in the nucleus envelope. It is found in the nucleus membrane. Its function is as follows. RNA-binding protein that acts as a key regulator of N6-methyladenosine (m6A) methylation of RNAs, thereby regulating different processes, such as hematopoietic cell homeostasis, alternative splicing of mRNAs and X chromosome inactivation mediated by Xist RNA. Associated component of the WMM complex, a complex that mediates N6-methyladenosine (m6A) methylation of RNAs, a modification that plays a role in the efficiency of mRNA splicing and RNA processing. Plays a key role in m6A methylation, possibly by binding target RNAs and recruiting the WMM complex. Involved in random X inactivation mediated by Xist RNA: acts by binding Xist RNA and recruiting the WMM complex, which mediates m6A methylation, leading to target YTHDC1 reader on Xist RNA and promoting transcription repression activity of Xist. Required for the development of multiple tissues, such as the maintenance of the homeostasis of long-term hematopoietic stem cells and for megakaryocyte (MK) and B-cell differentiation. Regulates megakaryocyte differentiation by regulating alternative splicing of genes important for megakaryocyte differentiation; probably regulates alternative splicing via m6A regulation. Required for placental vascular branching morphogenesis and embryonic development of the heart and spleen. Acts as a regulator of thrombopoietin response in hematopoietic stem cells by regulating alternative splicing of MPL. May also function as an mRNA export factor, stimulating export and expression of RTE-containing mRNAs which are present in many retrotransposons that require to be exported prior to splicing. High affinity binding of pre-mRNA to RBM15 may allow targeting of the mRNP to the export helicase DBP5 in a manner that is independent of splicing-mediated NXF1 deposition, resulting in export prior to splicing. May be implicated in HOX gene regulation. This Homo sapiens (Human) protein is RNA-binding protein 15.